The primary structure comprises 259 residues: 4-hydroxy-tetrahydrodipicolinate reductase (259 aa).

NAD(+) is bound at residue 9-14; the sequence is GANGRM. Arg-37 is an NADP(+) binding site. Residues 92–94 and 116–119 each bind NAD(+); these read GTT and ASNM. His-149 acts as the Proton donor/acceptor in catalysis. Residue His-150 coordinates (S)-2,3,4,5-tetrahydrodipicolinate. Lys-153 functions as the Proton donor in the catalytic mechanism. Residue 159-160 coordinates (S)-2,3,4,5-tetrahydrodipicolinate; it reads GT.

It belongs to the DapB family.

The protein resides in the cytoplasm. It carries out the reaction (S)-2,3,4,5-tetrahydrodipicolinate + NAD(+) + H2O = (2S,4S)-4-hydroxy-2,3,4,5-tetrahydrodipicolinate + NADH + H(+). It catalyses the reaction (S)-2,3,4,5-tetrahydrodipicolinate + NADP(+) + H2O = (2S,4S)-4-hydroxy-2,3,4,5-tetrahydrodipicolinate + NADPH + H(+). It functions in the pathway amino-acid biosynthesis; L-lysine biosynthesis via DAP pathway; (S)-tetrahydrodipicolinate from L-aspartate: step 4/4. Functionally, catalyzes the conversion of 4-hydroxy-tetrahydrodipicolinate (HTPA) to tetrahydrodipicolinate. In Desulfovibrio desulfuricans (strain ATCC 27774 / DSM 6949 / MB), this protein is 4-hydroxy-tetrahydrodipicolinate reductase.